The primary structure comprises 711 residues: MLNPIVRKFQYGQHTVTLETGMMARQATAAVMVSMDDTAVFVTVVGQKKAKPGQDFFPLTVNYQERTYAAGKIPGGFFRREGRPSEGETLIARLIDRPVRPLFPEGFVNEVQVIATVVSVNPQVNPDIVAMIGASAALSLSGIPFNGPIGAARVGYINDQYVLNPTQEELKSSKLDLVVAGTEAAVLMVESEAELLSEDQMLGAVVFGHEQQQIVIQNINDLVKEAGKPRWDWQPEAVNEALNARVAALAESRLSDAYRITDKQERYAQVDVIKSETIATLVAEDETLDANELGEILHAIEKNVVRSRVLAGEPRIDGREKDMIRGLDVRTGVLPRTHGSALFTRGETQALVTATLGTARDAQNIDELMGERTDSFLFHYNFPPYSVGETGMVGSPKRREIGHGRLAKRGVLAVMPTIDEFPYTVRVVSEITESNGSSSMASVCGASLALMDAGVPVKAAVAGIAMGLVKEGDNFVVLSDILGDEDHLGDMDFKVAGSRDGISALQMDIKIEGITKEIMQVALNQAKGARLHILGVMEQAINAPRGDISEFAPRIHTIKINPDKIKDVIGKGGSVIRALTEETGTTIEIEDDGTVKIAATDGDKAQHAIRRIEEITAEIEVGRIYNGKVTRIVDFGAFVAIGGGKEGLVHISQIADKRVEKVTDYLQMGQEVPVKVLEVDRQGRVRLSIKEATEQTPSAAAPEAPVAEQGE.

The Mg(2+) site is built by Asp486 and Asp492. Residues Pro553–Ile612 form the KH domain. The 69-residue stretch at Gly622 to Lys690 folds into the S1 motif domain. Residues Glu691–Glu711 form a disordered region. A compositionally biased stretch (low complexity) spans Ala699–Glu711.

Belongs to the polyribonucleotide nucleotidyltransferase family. In terms of assembly, component of the RNA degradosome, which is a multiprotein complex involved in RNA processing and mRNA degradation. It depends on Mg(2+) as a cofactor.

It localises to the cytoplasm. It catalyses the reaction RNA(n+1) + phosphate = RNA(n) + a ribonucleoside 5'-diphosphate. Involved in mRNA degradation. Catalyzes the phosphorolysis of single-stranded polyribonucleotides processively in the 3'- to 5'-direction. The polypeptide is Polyribonucleotide nucleotidyltransferase (Klebsiella pneumoniae (strain 342)).